We begin with the raw amino-acid sequence, 255 residues long: tRNA (guanine-N(1)-)-methyltransferase (255 aa).

S-adenosyl-L-methionine-binding positions include glycine 113 and 133–138 (IGDYVL).

The protein belongs to the RNA methyltransferase TrmD family. In terms of assembly, homodimer.

The protein localises to the cytoplasm. The enzyme catalyses guanosine(37) in tRNA + S-adenosyl-L-methionine = N(1)-methylguanosine(37) in tRNA + S-adenosyl-L-homocysteine + H(+). Its function is as follows. Specifically methylates guanosine-37 in various tRNAs. The protein is tRNA (guanine-N(1)-)-methyltransferase of Shigella flexneri serotype 5b (strain 8401).